Reading from the N-terminus, the 117-residue chain is Large ribosomal subunit protein bL20 (117 aa).

The protein belongs to the bacterial ribosomal protein bL20 family.

Functionally, binds directly to 23S ribosomal RNA and is necessary for the in vitro assembly process of the 50S ribosomal subunit. It is not involved in the protein synthesizing functions of that subunit. The protein is Large ribosomal subunit protein bL20 of Mycoplasma mobile (strain ATCC 43663 / 163K / NCTC 11711) (Mesomycoplasma mobile).